The following is a 118-amino-acid chain: Group 1 truncated hemoglobin GlbN (118 aa).

H70 lines the heme pocket.

The protein belongs to the truncated hemoglobin family. Group I subfamily. Monomer. Heme serves as cofactor.

The protein resides in the membrane. The polypeptide is Group 1 truncated hemoglobin GlbN (glbN) (Nostoc commune).